The sequence spans 824 residues: MSAPSEEEEYARLVMEAQPEWLRAEVKRLSHELAETTREKIQAAEYGLAVLEEKHQLKLQFEELEVDYEAIRSEMEQLKEAFGQAHTNHKKVAADGESREESLIQESASKEQYYVRKVLELQTELKQLRNVLTNTQSENERLASVAQELKEINQNVEIQRGRLRDDIKEYKFREARLLQDYSELEEENISLQKQVSVLRQNQVEFEGLKHEIKRLEEETEYLNSQLEDAIRLKEISERQLEEALETLKTEREQKNSLRKELSHYMSINDSFYTSHLHVSLDGLKFSDDAAEPNNDAEALVNGFEHGGLAKLPLDNKTSTPKKEGLAPPSPSLVSDLLSELNISEIQKLKQQLMQMEREKAGLLATLQDTQKQLEHTRGSLSEQQEKVTRLTENLSALRRLQASKERQTALDNEKDRDSHEDGDYYEVDINGPEILACKYHVAVAEAGELREQLKALRSTHEAREAQHAEEKGRYEAEGQALTEKVSLLEKASRQDRELLARLEKELKKVSDVAGETQGSLSVAQDELVTFSEELANLYHHVCMCNNETPNRVMLDYYREGQGGAGRTSPGGRTSPEARGRRSPILLPKGLLAPEAGRADGGTGDSSPSPGSSLPSPLSDPRREPMNIYNLIAIIRDQIKHLQAAVDRTTELSRQRIASQELGPAVDKDKEALMEEILKLKSLLSTKREQITTLRTVLKANKQTAEVALANLKSKYENEKAMVTETMMKLRNELKALKEDAATFSSLRAMFATRCDEYITQLDEMQRQLAAAEDEKKTLNSLLRMAIQQKLALTQRLELLELDHEQTRRGRAKAAPKTKPATPSL.

Position 2 is an N-acetylserine (Ser2). Residues 20–269 adopt a coiled-coil conformation; the sequence is EWLRAEVKRL…ELSHYMSIND (250 aa). The interval 25–398 is interacts with DYNLL1, DYNC1H1, DYNC1I2, DCTN1 and DCTN2; sequence EVKRLSHELA…RLTENLSALR (374 aa). Residues Ser190, Ser224, and Ser318 each carry the phosphoserine modification. A disordered region spans residues 311–330; the sequence is LPLDNKTSTPKKEGLAPPSP. Residue Thr319 is modified to Phosphothreonine. Residues 334-599 are interaction with KIF5A; it reads SDLLSELNIS…LLAPEAGRAD (266 aa). Residues 338-537 are a coiled coil; the sequence is SELNISEIQK…VTFSEELANL (200 aa). A phosphoserine mark is found at Ser343 and Ser395. 3 disordered regions span residues 398–425, 559–622, and 804–824; these read RRLQ…GDYY, EGQG…DPRR, and EQTR…TPSL. Basic and acidic residues predominate over residues 402-422; the sequence is ASKERQTALDNEKDRDSHEDG. Phosphoserine occurs at positions 568, 574, and 582. Residues 590–824 are interaction with RANBP2; sequence LLAPEAGRAD…PKTKPATPSL (235 aa). Thr602 carries the post-translational modification Phosphothreonine. Over residues 604–618 the composition is skewed to low complexity; that stretch reads DSSPSPGSSLPSPLS. Residues 666–808 adopt a coiled-coil conformation; the sequence is DKDKEALMEE…LELDHEQTRR (143 aa). Residues 666–814 are interacts with RAB6A; it reads DKDKEALMEE…QTRRGRAKAA (149 aa). Thr821 is subject to Phosphothreonine. The residue at position 823 (Ser823) is a Phosphoserine.

This sequence belongs to the BicD family. In terms of assembly, part of a tripartite complex with dynein and dynactin, acts an adapter linking the dynein motor complex and dynactin. Interacts with CPNE4 (via VWFA domain). Interacts with RAB6A. Interacts with NEK9. Interacts with DNAI1. Interacts with DYNC1H1. Interacts with RANBP2. Binds preferentially to tyrosinated microtubules than to detyrosinated microtubules. Interacts with DYNLL1, DYNC1I2; DCTN1, DCTN2 and KIF5A. Interacts with KIF1C. Post-translationally, phosphorylated by NEK9 in vitro. As to expression, ubiquitous.

The protein localises to the golgi apparatus. The protein resides in the cytoplasm. It is found in the cytoskeleton. It localises to the nucleus envelope. Its subcellular location is the nucleus. The protein localises to the nuclear pore complex. Acts as an adapter protein linking the dynein motor complex to various cargos and converts dynein from a non-processive to a highly processive motor in the presence of dynactin. Facilitates and stabilizes the interaction between dynein and dynactin and activates dynein processivity (the ability to move along a microtubule for a long distance without falling off the track). Facilitates the binding of RAB6A to the Golgi by stabilizing its GTP-bound form. Regulates coat complex coatomer protein I (COPI)-independent Golgi-endoplasmic reticulum transport via its interaction with RAB6A and recruitment of the dynein-dynactin motor complex. Contributes to nuclear and centrosomal positioning prior to mitotic entry through regulation of both dynein and kinesin-1. During G2 phase of the cell cycle, associates with RANBP2 at the nuclear pores and recruits dynein and dynactin to the nuclear envelope to ensure proper positioning of the nucleus relative to centrosomes prior to the onset of mitosis. The sequence is that of Protein bicaudal D homolog 2 from Homo sapiens (Human).